A 96-amino-acid chain; its full sequence is Large ribosomal subunit protein uL23 (96 aa).

It belongs to the universal ribosomal protein uL23 family. Part of the 50S ribosomal subunit. Contacts protein L29, and trigger factor when it is bound to the ribosome.

Functionally, one of the early assembly proteins it binds 23S rRNA. One of the proteins that surrounds the polypeptide exit tunnel on the outside of the ribosome. Forms the main docking site for trigger factor binding to the ribosome. The chain is Large ribosomal subunit protein uL23 from Clostridium novyi (strain NT).